The sequence spans 224 residues: Cytidylate kinase (224 aa).

11 to 19 (GPAAAGKST) serves as a coordination point for ATP.

It belongs to the cytidylate kinase family. Type 1 subfamily.

The protein localises to the cytoplasm. It carries out the reaction CMP + ATP = CDP + ADP. The enzyme catalyses dCMP + ATP = dCDP + ADP. This is Cytidylate kinase from Listeria monocytogenes serotype 4b (strain CLIP80459).